The sequence spans 109 residues: Flagellar hook-basal body complex protein FliE (109 aa).

The disordered stretch occupies residues 1–38 (MQAIHNDKSLLSPFSELNTDNRTKREESGNAFKEQKGG). Positions 19-38 (TDNRTKREESGNAFKEQKGG) are enriched in basic and acidic residues.

The protein belongs to the FliE family.

It localises to the bacterial flagellum basal body. The sequence is that of Flagellar hook-basal body complex protein FliE from Helicobacter pylori (strain G27).